Reading from the N-terminus, the 304-residue chain is Coenzyme PQQ synthesis protein B (304 aa).

It belongs to the PqqB family.

It participates in cofactor biosynthesis; pyrroloquinoline quinone biosynthesis. In terms of biological role, may be involved in the transport of PQQ or its precursor to the periplasm. This Pseudomonas paraeruginosa (strain DSM 24068 / PA7) (Pseudomonas aeruginosa (strain PA7)) protein is Coenzyme PQQ synthesis protein B.